The primary structure comprises 426 residues: Serine/threonine-protein kinase ssn3 (426 aa).

Positions 39 to 368 constitute a Protein kinase domain; it reads YHIVGFISSG…AKEALEHPYF (330 aa). Residues 45 to 53 and lysine 69 each bind ATP; that span reads ISSGTYGRV. The active-site Proton acceptor is aspartate 171. Basic and acidic residues predominate over residues 389–398; it reads RRITHDDNDI. The segment at 389–426 is disordered; that stretch reads RRITHDDNDIRSGSLPGTKRSGLPDDSLMSRAAKRMKE.

This sequence belongs to the protein kinase superfamily. CMGC Ser/Thr protein kinase family. CDC2/CDKX subfamily. As to quaternary structure, component of the srb8-11 complex, a regulatory module of the Mediator complex. Mg(2+) is required as a cofactor.

It is found in the nucleus. The enzyme catalyses L-seryl-[protein] + ATP = O-phospho-L-seryl-[protein] + ADP + H(+). It catalyses the reaction L-threonyl-[protein] + ATP = O-phospho-L-threonyl-[protein] + ADP + H(+). The catalysed reaction is [DNA-directed RNA polymerase] + ATP = phospho-[DNA-directed RNA polymerase] + ADP + H(+). Component of the srb8-11 complex. The srb8-11 complex is a regulatory module of the Mediator complex which is itself involved in regulation of basal and activated RNA polymerase II-dependent transcription. The srb8-11 complex may be involved in the transcriptional repression of a subset of genes regulated by Mediator. It may inhibit the association of the Mediator complex with RNA polymerase II to form the holoenzyme complex. The srb8-11 complex phosphorylates the C-terminal domain (CTD) of the largest subunit of RNA polymerase II. The polypeptide is Serine/threonine-protein kinase ssn3 (ssn3) (Emericella nidulans (strain FGSC A4 / ATCC 38163 / CBS 112.46 / NRRL 194 / M139) (Aspergillus nidulans)).